We begin with the raw amino-acid sequence, 706 residues long: Sodium- and chloride-dependent glycine transporter 1 (706 aa).

Residues 1-26 are disordered; that stretch reads MSGGDTRAAIARPRMAAAHGPVAPSS. Residues 1–108 are Cytoplasmic-facing; sequence MSGGDTRAAI…KRGNWGNQIE (108 aa). Low complexity predominate over residues 7 to 18; it reads RAAIARPRMAAA. A run of 3 helical transmembrane segments spans residues 109-129, 136-156, and 188-208; these read FVLT…FPYL, GAFM…LFFM, and VSTY…YYFF. The Extracellular portion of the chain corresponds to 209–285; that stretch reads SSMTHVLPWA…LSDDIGNFGE (77 aa). Helical transmembrane passes span 286-306, 315-335, 360-380, 407-427, 450-470, 506-526, 530-550, 570-590, and 610-630; these read VRLP…LCLI, VVYF…VRGV, VWGD…GGLI, SVYA…HLGV, LLPI…LLGL, VAGF…WLLL, YAAS…IMYI, LFFQ…ILVF, and VAIG…YAMF. Over 631–706 the chain is Cytoplasmic; that stretch reads RLCRTDGDTL…GSSRLQDSRI (76 aa). Phosphoserine is present on residues Ser-673 and Ser-698. The interval 695 to 706 is essential for interaction with EXOC1; that stretch reads SNGSSRLQDSRI.

Belongs to the sodium:neurotransmitter symporter (SNF) (TC 2.A.22) family. SLC6A9 subfamily. As to quaternary structure, interacts with EXOC1; interaction increases the transporter capacity of SLC6A9 probably by promoting its insertion into the cell membrane. Interacts with EXOC3 and EXOC4. Expressed in the brain, kidney, pancreas, lung, placenta and liver. In terms of tissue distribution, expressed only in the brain.

The protein localises to the cell membrane. It carries out the reaction glycine(out) + chloride(out) + 2 Na(+)(out) = glycine(in) + chloride(in) + 2 Na(+)(in). Inhibited by sarcosine. Its function is as follows. Sodium- and chloride-dependent glycine transporter. Essential for regulating glycine concentrations at inhibitory glycinergic synapses. In terms of biological role, sodium- and chloride-dependent glycine transporter. This chain is Sodium- and chloride-dependent glycine transporter 1 (SLC6A9), found in Homo sapiens (Human).